We begin with the raw amino-acid sequence, 119 residues long: MMNKKDARLRRARQTRAKIAELKVNRLTVFRTNSHIYAQVYSPCGTQVLASASTAEAEVRKELNGNGATVAAATVVGKRVAEKAKAAGVETVAFDRAGFRFHGRVKALADAAREAGLKF.

It belongs to the universal ribosomal protein uL18 family. Part of the 50S ribosomal subunit; part of the 5S rRNA/L5/L18/L25 subcomplex. Contacts the 5S and 23S rRNAs.

This is one of the proteins that bind and probably mediate the attachment of the 5S RNA into the large ribosomal subunit, where it forms part of the central protuberance. This chain is Large ribosomal subunit protein uL18, found in Cupriavidus metallidurans (strain ATCC 43123 / DSM 2839 / NBRC 102507 / CH34) (Ralstonia metallidurans).